The chain runs to 401 residues: Imidazolonepropionase (401 aa).

Fe(3+) contacts are provided by His66 and His68. Residues His66 and His68 each contribute to the Zn(2+) site. Residues Arg75, Tyr138, and His171 each contribute to the 4-imidazolone-5-propanoate site. Tyr138 provides a ligand contact to N-formimidoyl-L-glutamate. Position 236 (His236) interacts with Fe(3+). His236 contributes to the Zn(2+) binding site. Gln239 is a 4-imidazolone-5-propanoate binding site. Asp311 lines the Fe(3+) pocket. Residue Asp311 participates in Zn(2+) binding. N-formimidoyl-L-glutamate-binding residues include Asn313 and Gly315. A 4-imidazolone-5-propanoate-binding site is contributed by Thr316.

Belongs to the metallo-dependent hydrolases superfamily. HutI family. It depends on Zn(2+) as a cofactor. Fe(3+) is required as a cofactor.

The protein resides in the cytoplasm. It carries out the reaction 4-imidazolone-5-propanoate + H2O = N-formimidoyl-L-glutamate. It functions in the pathway amino-acid degradation; L-histidine degradation into L-glutamate; N-formimidoyl-L-glutamate from L-histidine: step 3/3. Catalyzes the hydrolytic cleavage of the carbon-nitrogen bond in imidazolone-5-propanoate to yield N-formimidoyl-L-glutamate. It is the third step in the universal histidine degradation pathway. The chain is Imidazolonepropionase from Pseudomonas fluorescens (strain ATCC BAA-477 / NRRL B-23932 / Pf-5).